Reading from the N-terminus, the 756-residue chain is 5-methyltetrahydropteroyltriglutamate--homocysteine methyltransferase (756 aa).

5-methyltetrahydropteroyltri-L-glutamate contacts are provided by residues Arg-16–Lys-19 and Lys-112. L-homocysteine is bound by residues Ile-432–Ser-434 and Glu-485. L-methionine contacts are provided by residues Ile-432 to Ser-434 and Glu-485. 5-methyltetrahydropteroyltri-L-glutamate is bound by residues Arg-516–Cys-517 and Trp-562. Residue Asp-600 coordinates L-homocysteine. Asp-600 serves as a coordination point for L-methionine. Glu-606 is a 5-methyltetrahydropteroyltri-L-glutamate binding site. His-642, Cys-644, and Glu-666 together coordinate Zn(2+). The active-site Proton donor is the His-695. Cys-727 lines the Zn(2+) pocket.

The protein belongs to the vitamin-B12 independent methionine synthase family. The cofactor is Zn(2+).

The catalysed reaction is 5-methyltetrahydropteroyltri-L-glutamate + L-homocysteine = tetrahydropteroyltri-L-glutamate + L-methionine. The protein operates within amino-acid biosynthesis; L-methionine biosynthesis via de novo pathway; L-methionine from L-homocysteine (MetE route): step 1/1. Functionally, catalyzes the transfer of a methyl group from 5-methyltetrahydrofolate to homocysteine resulting in methionine formation. In Haemophilus influenzae (strain ATCC 51907 / DSM 11121 / KW20 / Rd), this protein is 5-methyltetrahydropteroyltriglutamate--homocysteine methyltransferase.